Here is a 58-residue protein sequence, read N- to C-terminus: UPF0434 protein NT01EI_2448 (58 aa).

Belongs to the UPF0434 family.

The sequence is that of UPF0434 protein NT01EI_2448 from Edwardsiella ictaluri (strain 93-146).